Consider the following 379-residue polypeptide: F-box protein At1g30200 (379 aa).

In terms of domain architecture, F-box spans 24–72; sequence DHFDLLPDSLLLLIFDKVADVKDLGRCCIVSRRFHSLVPFVENVLVRVD.

The chain is F-box protein At1g30200 from Arabidopsis thaliana (Mouse-ear cress).